We begin with the raw amino-acid sequence, 82 residues long: Large ribosomal subunit protein eL14 (82 aa).

This sequence belongs to the eukaryotic ribosomal protein eL14 family.

The protein is Large ribosomal subunit protein eL14 of Pyrococcus abyssi (strain GE5 / Orsay).